The sequence spans 144 residues: Large ribosomal subunit protein uL16 (144 aa).

A compositionally biased stretch (basic residues) spans 1-19; the sequence is MLLPKRVKYRRQHRPKTTG. A disordered region spans residues 1 to 23; sequence MLLPKRVKYRRQHRPKTTGRSKG.

Belongs to the universal ribosomal protein uL16 family. As to quaternary structure, part of the 50S ribosomal subunit.

Functionally, binds 23S rRNA and is also seen to make contacts with the A and possibly P site tRNAs. The protein is Large ribosomal subunit protein uL16 of Staphylococcus epidermidis (strain ATCC 35984 / DSM 28319 / BCRC 17069 / CCUG 31568 / BM 3577 / RP62A).